A 433-amino-acid chain; its full sequence is Enolase (433 aa).

Gln-163 provides a ligand contact to (2R)-2-phosphoglycerate. The active-site Proton donor is Glu-205. Mg(2+)-binding residues include Asp-241, Glu-289, and Asp-316. Positions 341, 370, 371, and 392 each coordinate (2R)-2-phosphoglycerate. Residue Lys-341 is the Proton acceptor of the active site.

It belongs to the enolase family. It depends on Mg(2+) as a cofactor.

It is found in the cytoplasm. Its subcellular location is the secreted. The protein resides in the cell surface. It catalyses the reaction (2R)-2-phosphoglycerate = phosphoenolpyruvate + H2O. It functions in the pathway carbohydrate degradation; glycolysis; pyruvate from D-glyceraldehyde 3-phosphate: step 4/5. Functionally, catalyzes the reversible conversion of 2-phosphoglycerate (2-PG) into phosphoenolpyruvate (PEP). It is essential for the degradation of carbohydrates via glycolysis. In Treponema denticola (strain ATCC 35405 / DSM 14222 / CIP 103919 / JCM 8153 / KCTC 15104), this protein is Enolase.